The following is a 216-amino-acid chain: Transmembrane emp24 domain-containing protein eca (216 aa).

The N-terminal stretch at Met1–Gly20 is a signal peptide. The Lumenal segment spans residues Leu21–Ser182. The GOLD domain occupies Arg30–Val126. Positions Ala134–Asn164 form a coiled coil. A helical membrane pass occupies residues Arg183 to Met203. At Arg204–Val216 the chain is on the cytoplasmic side. The short motif at Lys213 to Val216 is the Prevents secretion from ER element.

The protein belongs to the EMP24/GP25L family.

The protein resides in the endoplasmic reticulum membrane. Eca and bai are essential, though not redundant, for dorsoventral patterning of the embryo. Specifically required during early embryogenesis for the activity of maternal tkv, while the zygotic tkv is not affected. Involved in Golgi organization. This Drosophila ananassae (Fruit fly) protein is Transmembrane emp24 domain-containing protein eca.